A 248-amino-acid polypeptide reads, in one-letter code: tRNA pseudouridine synthase A (248 aa).

The active-site Nucleophile is Asp-53. Position 111 (Tyr-111) interacts with substrate.

It belongs to the tRNA pseudouridine synthase TruA family. Homodimer.

It carries out the reaction uridine(38/39/40) in tRNA = pseudouridine(38/39/40) in tRNA. Its function is as follows. Formation of pseudouridine at positions 38, 39 and 40 in the anticodon stem and loop of transfer RNAs. The chain is tRNA pseudouridine synthase A from Listeria monocytogenes serotype 4b (strain CLIP80459).